A 367-amino-acid chain; its full sequence is Uroporphyrinogen decarboxylase (367 aa).

Residues 28 to 32, aspartate 78, tyrosine 158, threonine 213, and histidine 334 each bind substrate; that span reads RQAGR.

Belongs to the uroporphyrinogen decarboxylase family. In terms of assembly, homodimer.

The protein localises to the cytoplasm. It carries out the reaction uroporphyrinogen III + 4 H(+) = coproporphyrinogen III + 4 CO2. It functions in the pathway porphyrin-containing compound metabolism; protoporphyrin-IX biosynthesis; coproporphyrinogen-III from 5-aminolevulinate: step 4/4. Functionally, catalyzes the decarboxylation of four acetate groups of uroporphyrinogen-III to yield coproporphyrinogen-III. This chain is Uroporphyrinogen decarboxylase, found in Ralstonia pickettii (strain 12J).